We begin with the raw amino-acid sequence, 196 residues long: CASP-like protein 2U1 (196 aa).

At 1 to 11 the chain is on the cytoplasmic side; the sequence is MAPMECVRRRN. Residues 12 to 32 traverse the membrane as a helical segment; the sequence is VGELVLRCAATLVCMLSLMLL. The Extracellular segment spans residues 33–58; that stretch reads VRDQQIAVQEVGVTSVTTQLRYSSST. The chain crosses the membrane as a helical span at residues 59–79; sequence GLVYLVYANGLVALYCFVVVL. The Cytoplasmic portion of the chain corresponds to 80–95; sequence TSSFNGGSVMRRNKSG. Residues 96 to 116 traverse the membrane as a helical segment; it reads AWALFVLDQVLACILLSAASA. Residues 117-148 are Extracellular-facing; the sequence is ASEIAFLVEKGAKKTIWDSKCIVYGHFCRMLE. A helical transmembrane segment spans residues 149–169; it reads VSIATSFIAVIMLGSICVLSA. Residues 170 to 196 are Cytoplasmic-facing; sequence KQLFQQYTHYARIVNMVKLKSTPNSLL.

This sequence belongs to the Casparian strip membrane proteins (CASP) family. As to quaternary structure, homodimer and heterodimers.

It localises to the cell membrane. The sequence is that of CASP-like protein 2U1 from Pteridium aquilinum subsp. aquilinum (Bracken fern).